The sequence spans 268 residues: Nickel import ATP-binding protein NikE (268 aa).

An ABC transporter domain is found at 4–252 (LNVCGLSHHY…SSDAGRVLQN (249 aa)). An ATP-binding site is contributed by 45–52 (GRSGCGKS).

Belongs to the ABC transporter superfamily. Nickel importer (TC 3.A.1.5.3) family. In terms of assembly, the complex is composed of two ATP-binding proteins (NikD and NikE), two transmembrane proteins (NikB and NikC) and a solute-binding protein (NikA).

It is found in the cell inner membrane. The enzyme catalyses Ni(2+)(out) + ATP + H2O = Ni(2+)(in) + ADP + phosphate + H(+). In terms of biological role, part of the ABC transporter complex NikABCDE involved in nickel import. Responsible for energy coupling to the transport system. In Shigella flexneri serotype 5b (strain 8401), this protein is Nickel import ATP-binding protein NikE.